The sequence spans 395 residues: Elongation factor Tu (395 aa).

The 195-residue stretch at 10-204 folds into the tr-type G domain; that stretch reads LPHVNIGTIG…AVDEYIPTPQ (195 aa). Positions 19–26 are G1; sequence GHVDHGKT. 19–26 lines the GTP pocket; that stretch reads GHVDHGKT. Residue Thr-26 coordinates Mg(2+). The segment at 60–64 is G2; the sequence is GITIN. The interval 81–84 is G3; the sequence is DCPG. Residues 81–85 and 136–139 each bind GTP; these read DCPGH and NKCD. Residues 136-139 are G4; the sequence is NKCD. Positions 174-176 are G5; the sequence is SAL.

The protein belongs to the TRAFAC class translation factor GTPase superfamily. Classic translation factor GTPase family. EF-Tu/EF-1A subfamily. In terms of assembly, monomer.

It is found in the cytoplasm. The enzyme catalyses GTP + H2O = GDP + phosphate + H(+). GTP hydrolase that promotes the GTP-dependent binding of aminoacyl-tRNA to the A-site of ribosomes during protein biosynthesis. This is Elongation factor Tu from Mycoplasma capricolum subsp. capricolum (strain California kid / ATCC 27343 / NCTC 10154).